The primary structure comprises 690 residues: Elongation factor G (690 aa).

A tr-type G domain is found at 8 to 283 (EDYRNFGIMA…AVVDFLPSPL (276 aa)). Residues 17-24 (AHIDAGKT), 81-85 (DTPGH), and 135-138 (NKMD) contribute to the GTP site.

The protein belongs to the TRAFAC class translation factor GTPase superfamily. Classic translation factor GTPase family. EF-G/EF-2 subfamily.

It localises to the cytoplasm. In terms of biological role, catalyzes the GTP-dependent ribosomal translocation step during translation elongation. During this step, the ribosome changes from the pre-translocational (PRE) to the post-translocational (POST) state as the newly formed A-site-bound peptidyl-tRNA and P-site-bound deacylated tRNA move to the P and E sites, respectively. Catalyzes the coordinated movement of the two tRNA molecules, the mRNA and conformational changes in the ribosome. The chain is Elongation factor G from Nitrobacter hamburgensis (strain DSM 10229 / NCIMB 13809 / X14).